Here is a 104-residue protein sequence, read N- to C-terminus: L-rhamnose mutarotase (104 aa).

Tyr-18 contributes to the substrate binding site. His-22 serves as the catalytic Proton donor. Substrate is bound by residues Tyr-41 and 76-77; that span reads WW.

This sequence belongs to the rhamnose mutarotase family. Homodimer.

Its subcellular location is the cytoplasm. It catalyses the reaction alpha-L-rhamnose = beta-L-rhamnose. It functions in the pathway carbohydrate metabolism; L-rhamnose metabolism. Involved in the anomeric conversion of L-rhamnose. This is L-rhamnose mutarotase from Salmonella agona (strain SL483).